The sequence spans 159 residues: Protein SPA, chloroplastic (159 aa).

A chloroplast-targeting transit peptide spans 1–47; sequence MLTAPSLSRFKSPFISSPLKLPTLSSSFFTQKFHQTCRRRNSYPCIK. The chain crosses the membrane as a helical span at residues 56 to 76; sequence VIAITVGVLSVAIGVGIPVFY. The interval 85–145 is CR-type-like; that stretch reads KRENTQPCFP…TCTTCQGSGI (61 aa). CXXCXGXG motif repeat units lie at residues 92 to 99, 103 to 110, 126 to 133, and 137 to 144; these read CFPCTGTG, CRFCMGTG, CINCDGAG, and CTTCQGSG.

Expressed in source leaves. Lower levels of expression in fruits and stems.

The protein resides in the plastid. It localises to the chloroplast thylakoid membrane. Functionally, participates in determining harvest index (HI) by affecting source-sink carbon distribution. Up-regulates the conversion of fixed carbon to exportable sugars. This chain is Protein SPA, chloroplastic, found in Solanum lycopersicum (Tomato).